A 297-amino-acid polypeptide reads, in one-letter code: Phosphatidylserine decarboxylase proenzyme (297 aa).

Residues Asp92, His149, and Ser254 each act as charge relay system; for autoendoproteolytic cleavage activity in the active site. Ser254 (schiff-base intermediate with substrate; via pyruvic acid; for decarboxylase activity) is an active-site residue. A Pyruvic acid (Ser); by autocatalysis modification is found at Ser254.

Belongs to the phosphatidylserine decarboxylase family. PSD-B subfamily. Prokaryotic type I sub-subfamily. Heterodimer of a large membrane-associated beta subunit and a small pyruvoyl-containing alpha subunit. The cofactor is pyruvate. In terms of processing, is synthesized initially as an inactive proenzyme. Formation of the active enzyme involves a self-maturation process in which the active site pyruvoyl group is generated from an internal serine residue via an autocatalytic post-translational modification. Two non-identical subunits are generated from the proenzyme in this reaction, and the pyruvate is formed at the N-terminus of the alpha chain, which is derived from the carboxyl end of the proenzyme. The autoendoproteolytic cleavage occurs by a canonical serine protease mechanism, in which the side chain hydroxyl group of the serine supplies its oxygen atom to form the C-terminus of the beta chain, while the remainder of the serine residue undergoes an oxidative deamination to produce ammonia and the pyruvoyl prosthetic group on the alpha chain. During this reaction, the Ser that is part of the protease active site of the proenzyme becomes the pyruvoyl prosthetic group, which constitutes an essential element of the active site of the mature decarboxylase.

It is found in the cell membrane. It carries out the reaction a 1,2-diacyl-sn-glycero-3-phospho-L-serine + H(+) = a 1,2-diacyl-sn-glycero-3-phosphoethanolamine + CO2. Its pathway is phospholipid metabolism; phosphatidylethanolamine biosynthesis; phosphatidylethanolamine from CDP-diacylglycerol: step 2/2. In terms of biological role, catalyzes the formation of phosphatidylethanolamine (PtdEtn) from phosphatidylserine (PtdSer). This is Phosphatidylserine decarboxylase proenzyme from Bordetella bronchiseptica (strain ATCC BAA-588 / NCTC 13252 / RB50) (Alcaligenes bronchisepticus).